A 172-amino-acid chain; its full sequence is Translation initiation factor IF-3 (172 aa).

Belongs to the IF-3 family. As to quaternary structure, monomer.

It is found in the cytoplasm. IF-3 binds to the 30S ribosomal subunit and shifts the equilibrium between 70S ribosomes and their 50S and 30S subunits in favor of the free subunits, thus enhancing the availability of 30S subunits on which protein synthesis initiation begins. The polypeptide is Translation initiation factor IF-3 (Bartonella henselae (strain ATCC 49882 / DSM 28221 / CCUG 30454 / Houston 1) (Rochalimaea henselae)).